The primary structure comprises 196 residues: ATP-dependent Clp protease proteolytic subunit (196 aa).

The active-site Nucleophile is S101. H126 is an active-site residue.

It belongs to the peptidase S14 family. As to quaternary structure, component of the chloroplastic Clp protease core complex.

The protein resides in the plastid. The protein localises to the chloroplast stroma. The catalysed reaction is Hydrolysis of proteins to small peptides in the presence of ATP and magnesium. alpha-casein is the usual test substrate. In the absence of ATP, only oligopeptides shorter than five residues are hydrolyzed (such as succinyl-Leu-Tyr-|-NHMec, and Leu-Tyr-Leu-|-Tyr-Trp, in which cleavage of the -Tyr-|-Leu- and -Tyr-|-Trp bonds also occurs).. Cleaves peptides in various proteins in a process that requires ATP hydrolysis. Has a chymotrypsin-like activity. Plays a major role in the degradation of misfolded proteins. This chain is ATP-dependent Clp protease proteolytic subunit, found in Lobularia maritima (Sweet alyssum).